Here is a 273-residue protein sequence, read N- to C-terminus: Large ribosomal subunit protein uL2 (273 aa).

2 disordered regions span residues 28–53 (KPFA…TTRH) and 221–273 (RGTA…RRSK). A compositionally biased stretch (low complexity) spans 39-48 (KSGGRNNNGR).

This sequence belongs to the universal ribosomal protein uL2 family. In terms of assembly, part of the 50S ribosomal subunit. Forms a bridge to the 30S subunit in the 70S ribosome.

Functionally, one of the primary rRNA binding proteins. Required for association of the 30S and 50S subunits to form the 70S ribosome, for tRNA binding and peptide bond formation. It has been suggested to have peptidyltransferase activity; this is somewhat controversial. Makes several contacts with the 16S rRNA in the 70S ribosome. This Salmonella agona (strain SL483) protein is Large ribosomal subunit protein uL2.